We begin with the raw amino-acid sequence, 537 residues long: Putative cysteine ligase BshC (537 aa).

Residues 422 to 450 (IEKVEGMIEQQRRLNKDLLDEVAGNQNNI) are a coiled coil.

Belongs to the BshC family.

Functionally, involved in bacillithiol (BSH) biosynthesis. May catalyze the last step of the pathway, the addition of cysteine to glucosamine malate (GlcN-Mal) to generate BSH. The chain is Putative cysteine ligase BshC from Staphylococcus aureus (strain Mu3 / ATCC 700698).